The sequence spans 126 residues: Probable 4-amino-4-deoxy-L-arabinose-phosphoundecaprenol flippase subunit ArnF (126 aa).

A helical membrane pass occupies residues 1–21 (MGFLWALFSVGLVSAAQLLLR). The Periplasmic segment spans residues 22–47 (SAMVALPPLTDIVAFLQHLLHFQPGT). Residues 48–68 (VGLFFGLLGYLLSMVCWYFAL) form a helical membrane-spanning segment. Over 69-76 (HRLPLSKA) the chain is Cytoplasmic. A helical transmembrane segment spans residues 77–97 (YALLSLSYILVWAAAIWLPGW). Topologically, residues 98–100 (HEP) are periplasmic. The helical transmembrane segment at 101-121 (FYWQSLLGVTIIVAGVLTIFW) threads the bilayer. Residues 122 to 126 (PVKRR) are Cytoplasmic-facing.

Belongs to the ArnF family. Heterodimer of ArnE and ArnF.

The protein localises to the cell inner membrane. The protein operates within bacterial outer membrane biogenesis; lipopolysaccharide biosynthesis. Its function is as follows. Translocates 4-amino-4-deoxy-L-arabinose-phosphoundecaprenol (alpha-L-Ara4N-phosphoundecaprenol) from the cytoplasmic to the periplasmic side of the inner membrane. The polypeptide is Probable 4-amino-4-deoxy-L-arabinose-phosphoundecaprenol flippase subunit ArnF (Klebsiella pneumoniae (strain 342)).